We begin with the raw amino-acid sequence, 317 residues long: Melanocyte-stimulating hormone receptor (317 aa).

The Extracellular segment spans residues 1–37 (MPVQGSQRRLLGSLNSTPTATPRLGLAANQTGARCLE). An N-linked (GlcNAc...) asparagine glycan is attached at Asn-29. Residues 38–63 (VSIPDGLFLSLGLVSLVENVLVVVAI) traverse the membrane as a helical segment. Residues 64 to 72 (ARNRNLHSP) are Cytoplasmic-facing. Residues 73–93 (MYCFICCLALSDLLVSGSNML) traverse the membrane as a helical segment. At 94 to 118 (ETAVILLLEAGALAARAAVVQQLDN) the chain is on the extracellular side. Residues 119–140 (VIDVITCSSMLSSLCFLGAIAV) form a helical membrane-spanning segment. Residues 141 to 163 (DRYISIFYALRYHSIVTLRRARR) lie on the Cytoplasmic side of the membrane. A helical transmembrane segment spans residues 164–183 (VVAAIWVASVLFSTLFIAYC). Residues 184–191 (DHAAVLLS) are Extracellular-facing. The chain crosses the membrane as a helical span at residues 192–211 (LVVFFLAMLVLMAVLYVHML). Residues 212 to 240 (ARACQHAQGIAQLHKRQRPAHQGVGLKGA) are Cytoplasmic-facing. Residues 241–266 (ATLTILLGIFFLCWGPFFLHLTLIVL) traverse the membrane as a helical segment. Over 267–279 (CPQHPTCSCIFKN) the chain is Extracellular. The chain crosses the membrane as a helical span at residues 280 to 300 (FNLFLTLIICNAIIDPLIYAF). Over 301–317 (RSQELRRTLKKVLLCSW) the chain is Cytoplasmic. A lipid anchor (S-palmitoyl cysteine) is attached at Cys-315.

This sequence belongs to the G-protein coupled receptor 1 family. As to quaternary structure, interacts with MGRN1, but does not undergo MGRN1-mediated ubiquitination; this interaction competes with GNAS-binding and thus inhibits agonist-induced cAMP production. Interacts with OPN3; the interaction results in a decrease in MC1R-mediated cAMP signaling and ultimately a decrease in melanin production in melanocytes.

It localises to the cell membrane. Its function is as follows. Receptor for MSH (alpha, beta and gamma) and ACTH. The activity of this receptor is mediated by G proteins which activate adenylate cyclase. Mediates melanogenesis, the production of eumelanin (black/brown) and phaeomelanin (red/yellow), via regulation of cAMP signaling in melanocytes. In Trachypithecus auratus (Javan langur), this protein is Melanocyte-stimulating hormone receptor (MC1R).